An 82-amino-acid polypeptide reads, in one-letter code: Protein CYSTEINE-RICH TRANSMEMBRANE MODULE 13 (82 aa).

The tract at residues 1–58 (MYHQEQHPVGAPPPQGYPPKDGYPPAGYPPAGYPPPGYAQGYPAQGYPPPQYSQAPQQ) is disordered. The span at 26-37 (AGYPPAGYPPPG) shows a compositional bias: pro residues. A helical membrane pass occupies residues 59–76 (KQNAGMLEGCLAALCCCC).

It belongs to the CYSTM1 family. As to quaternary structure, homodimer and heterodimers. Interacts with CYSTM7, CYTSM3, CYTSM4, CYTSM5, CYTSM6, CYTSM9, CYTSM10 and CYTSM11. Binds weakly to CYSTM1 and CYSTM2. In terms of tissue distribution, expressed in root meristem, root vasculature, leaf vasculature and floral organ primordia. Mostly expressed in roots and flowers and, to a lower extent, in stems, siliques and leaves.

It is found in the cell membrane. Required for the promotion of megasporogenesis, or promotion of germ cell formation from somatic precursor cells. Acts redundantly with WIH2. Functions in a genetic pathway downstream of SPL/NZZ and WUS and together with TRN2 in promoting megasporogenesis. Involved in resistance to abiotic stress. This Arabidopsis thaliana (Mouse-ear cress) protein is Protein CYSTEINE-RICH TRANSMEMBRANE MODULE 13.